A 153-amino-acid polypeptide reads, in one-letter code: Ribosomal RNA large subunit methyltransferase H (153 aa).

Residues L63, G102, and 121–126 (FGKITL) contribute to the S-adenosyl-L-methionine site.

Belongs to the RNA methyltransferase RlmH family. As to quaternary structure, homodimer.

It is found in the cytoplasm. It carries out the reaction pseudouridine(1915) in 23S rRNA + S-adenosyl-L-methionine = N(3)-methylpseudouridine(1915) in 23S rRNA + S-adenosyl-L-homocysteine + H(+). Specifically methylates the pseudouridine at position 1915 (m3Psi1915) in 23S rRNA. The chain is Ribosomal RNA large subunit methyltransferase H from Sulfurovum sp. (strain NBC37-1).